Here is a 107-residue protein sequence, read N- to C-terminus: Anti-adapter protein IraM (107 aa).

It belongs to the IraM/RssC family.

It is found in the cytoplasm. In terms of biological role, inhibits RpoS proteolysis by regulating RssB activity, thereby increasing the stability of the sigma stress factor RpoS during magnesium starvation. In Escherichia coli (strain K12 / MC4100 / BW2952), this protein is Anti-adapter protein IraM.